The chain runs to 187 residues: Dihydrofolate reductase type A10 (187 aa).

Positions 2-174 constitute a DHFR domain; sequence NISLIFANEL…YSLSIDKFVR (173 aa).

The protein belongs to the dihydrofolate reductase family. As to quaternary structure, homodimer.

It catalyses the reaction (6S)-5,6,7,8-tetrahydrofolate + NADP(+) = 7,8-dihydrofolate + NADPH + H(+). Its pathway is cofactor biosynthesis; tetrahydrofolate biosynthesis; 5,6,7,8-tetrahydrofolate from 7,8-dihydrofolate: step 1/1. Its function is as follows. Key enzyme in folate metabolism. Catalyzes an essential reaction for de novo glycine and purine synthesis, and for DNA precursor synthesis. This Escherichia coli protein is Dihydrofolate reductase type A10 (dfrA10).